Consider the following 196-residue polypeptide: DnaA initiator-associating protein DiaA (196 aa).

Positions 34–196 (LVQSLLNGNK…DNTLFPHQDD (163 aa)) constitute an SIS domain.

Belongs to the SIS family. DiaA subfamily. As to quaternary structure, homotetramer; dimer of dimers.

Functionally, required for the timely initiation of chromosomal replication via direct interactions with the DnaA initiator protein. This Cronobacter sakazakii (strain ATCC BAA-894) (Enterobacter sakazakii) protein is DnaA initiator-associating protein DiaA.